A 348-amino-acid polypeptide reads, in one-letter code: Phosphoribosylformylglycinamidine cyclo-ligase (348 aa).

This sequence belongs to the AIR synthase family.

It localises to the cytoplasm. It catalyses the reaction 2-formamido-N(1)-(5-O-phospho-beta-D-ribosyl)acetamidine + ATP = 5-amino-1-(5-phospho-beta-D-ribosyl)imidazole + ADP + phosphate + H(+). It functions in the pathway purine metabolism; IMP biosynthesis via de novo pathway; 5-amino-1-(5-phospho-D-ribosyl)imidazole from N(2)-formyl-N(1)-(5-phospho-D-ribosyl)glycinamide: step 2/2. The sequence is that of Phosphoribosylformylglycinamidine cyclo-ligase from Cereibacter sphaeroides (strain KD131 / KCTC 12085) (Rhodobacter sphaeroides).